The following is a 381-amino-acid chain: Lysophosphatidylserine lipase ABHD12 (381 aa).

The Cytoplasmic segment spans residues 1–58 (MRKRNESVTVEHERAAAAPAPLDKGCSLRHSLRLPAADTGMKRPLGRRHGLWFRLRRL). Residues 59 to 79 (IIWLLGVYIAIPFLVKLCPAI) form a helical membrane-spanning segment. At 80-381 (QAKLVFLNFV…LGIPEHEHHH (302 aa)) the chain is on the extracellular side. An N-linked (GlcNAc...) asparagine glycan is attached at Asn106. Ser229 acts as the Nucleophile in catalysis. Residues Asp316 and His355 each act as charge relay system in the active site.

This sequence belongs to the serine esterase family.

It is found in the endoplasmic reticulum membrane. The catalysed reaction is 1-(9Z-octadecenoyl)-sn-glycero-3-phospho-L-serine + H2O = sn-glycero-3-phospho-L-serine + (9Z)-octadecenoate + H(+). It carries out the reaction 1-(9Z-octadecenoyl)-sn-glycero-3-phospho-(1'-sn-glycerol) + H2O = sn-glycero-3-phospho-(1'-sn-glycerol) + (9Z)-octadecenoate + H(+). The enzyme catalyses 1-(9Z-octadecenoyl)-sn-glycero-3-phospho-(1D-myo-inositol) + H2O = sn-glycero-3-phospho-1D-myo-inositol + (9Z)-octadecenoate + H(+). It catalyses the reaction 1-(9Z-octadecenoyl)-sn-glycero-3-phosphoethanolamine + H2O = sn-glycero-3-phosphoethanolamine + (9Z)-octadecenoate + H(+). The catalysed reaction is 1-(9Z-octadecenoyl)-sn-glycero-3-phosphocholine + H2O = 1-(9Z-octadecenoyl)-sn-glycerol + phosphocholine + H(+). It carries out the reaction 2-(9Z-octadecenoyl)-glycerol + H2O = glycerol + (9Z)-octadecenoate + H(+). The enzyme catalyses 1-hexadecanoyl-sn-glycero-3-phospho-L-serine + H2O = sn-glycero-3-phospho-L-serine + hexadecanoate + H(+). It catalyses the reaction 2-(5Z,8Z,11Z,14Z-eicosatetraenoyl)-glycerol + H2O = glycerol + (5Z,8Z,11Z,14Z)-eicosatetraenoate + H(+). The catalysed reaction is Hydrolyzes glycerol monoesters of long-chain fatty acids.. It carries out the reaction 1-decanoylglycerol + H2O = decanoate + glycerol + H(+). The enzyme catalyses 1-dodecanoylglycerol + H2O = dodecanoate + glycerol + H(+). It catalyses the reaction 1-tetradecanoylglycerol + H2O = tetradecanoate + glycerol + H(+). The catalysed reaction is 2-hexadecanoylglycerol + H2O = glycerol + hexadecanoate + H(+). It carries out the reaction 1-(9Z-octadecenoyl)-glycerol + H2O = glycerol + (9Z)-octadecenoate + H(+). The enzyme catalyses 2-(9Z,12Z-octadecadienoyl)-glycerol + H2O = (9Z,12Z)-octadecadienoate + glycerol + H(+). It catalyses the reaction 1-(5Z,8Z,11Z,14Z-eicosatetraenoyl)-glycerol + H2O = glycerol + (5Z,8Z,11Z,14Z)-eicosatetraenoate + H(+). The catalysed reaction is 1-(9Z,12Z-octadecadienoyl)-glycerol + H2O = (9Z,12Z)-octadecadienoate + glycerol + H(+). It carries out the reaction 1-hexadecanoylglycerol + H2O = glycerol + hexadecanoate + H(+). The enzyme catalyses 1-octadecanoylglycerol + H2O = octadecanoate + glycerol + H(+). It catalyses the reaction 1-octadecanoyl-2-(9,10-epoxyoctadecanoyl)-sn-glycero-3-phospho-L-serine + H2O = 9,10-epoxyoctadecanoate + 1-octadecanoyl-sn-glycero-3-phosphoserine + H(+). The catalysed reaction is 1-octadecanoyl-2-(10-hydroxyoctadecanoyl)-sn-glycero-3-phospho-L-serine + H2O = 1-octadecanoyl-sn-glycero-3-phosphoserine + 10-hydroxyoctadecanoate + H(+). It carries out the reaction 1-hexadecanoyl-2-(10-hydroxyoctadecanoyl)-sn-glycero-3-phospho-L-serine + H2O = 10-hydroxyoctadecanoate + 1-hexadecanoyl-sn-glycero-3-phospho-L-serine + H(+). Lysophosphatidylserine (LPS) lipase that mediates the hydrolysis of lysophosphatidylserine, a class of signaling lipids that regulates immunological and neurological processes. Represents a major lysophosphatidylserine lipase in the brain, thereby playing a key role in the central nervous system. Also able to hydrolyze oxidized phosphatidylserine; oxidized phosphatidylserine is produced in response to severe inflammatory stress and constitutes a proapoptotic 'eat me' signal. Also has monoacylglycerol (MAG) lipase activity: hydrolyzes 2-arachidonoylglycerol (2-AG), thereby acting as a regulator of endocannabinoid signaling pathways. Has a strong preference for very-long-chain lipid substrates; substrate specificity is likely due to improved catalysis and not improved substrate binding. The sequence is that of Lysophosphatidylserine lipase ABHD12 from Gallus gallus (Chicken).